A 459-amino-acid chain; its full sequence is Vanillin aminotransferase (459 aa).

Residues 115-116 (GS) and Asp-255 each bind pyridoxal 5'-phosphate. Residue Lys-284 is modified to N6-(pyridoxal phosphate)lysine. Residue 320-321 (FT) coordinates pyridoxal 5'-phosphate. Residues 428-459 (LSLEELDELIRIYGKALKDTEKRVEELKSQKK) adopt a coiled-coil conformation.

This sequence belongs to the class-III pyridoxal-phosphate-dependent aminotransferase family. In terms of tissue distribution, expressed in placental tissue of immature fruit.

The catalysed reaction is vanillin + L-alanine = vanillylamine + pyruvate. Involved in the biosynthesis of capsaicinoids natural products, pungent alkaloids synthesized from phenylpropanoid intermediates in the placental tissue of chili pepper fruit acting as repellant on herbivorous mammals and conferring spiciness to hot peppers. Can transfer an amine from alanine to vanillin, forming vanillylamine and pyruvate. The chain is Vanillin aminotransferase from Capsicum frutescens (Cayenne pepper).